Consider the following 223-residue polypeptide: Adenylate kinase 4, mitochondrial (223 aa).

Residue 15–20 (GSGKGT) coordinates a ribonucleoside 5'-triphosphate. The tract at residues 35-64 (SSGHLLRENLKTNTEVGDVAKQYLEKGLLV) is NMP. Serine 36 and arginine 41 together coordinate AMP. Lysine 60 carries the post-translational modification N6-succinyllysine. AMP-binding positions include 62 to 64 (LLV), 89 to 92 (GFPR), and glutamine 96. An LID region spans residues 125 to 162 (RRWIHPSSGRVYNLDFNPPQVLGVDDITGEPLVQQEDD). A ribonucleoside 5'-triphosphate is bound by residues arginine 126 and 135–136 (VY). An AMP-binding site is contributed by arginine 170. Lysine 175 bears the N6-acetyllysine mark. N6-acetyllysine; alternate occurs at positions 179 and 186. N6-succinyllysine; alternate is present on residues lysine 179 and lysine 186. Threonine 199 lines the a ribonucleoside 5'-triphosphate pocket.

It belongs to the adenylate kinase family. AK3 subfamily. As to quaternary structure, monomer. Interacts with SLC25A5/ANT2. In terms of tissue distribution, expressed in the pyramidal cells in the hippocampus.

The protein resides in the mitochondrion matrix. It catalyses the reaction a ribonucleoside 5'-phosphate + ATP = a ribonucleoside 5'-diphosphate + ADP. The enzyme catalyses AMP + ATP = 2 ADP. It carries out the reaction GTP + AMP = GDP + ADP. The catalysed reaction is CMP + ATP = CDP + ADP. It catalyses the reaction GTP + CMP = CDP + GDP. The enzyme catalyses dAMP + ATP = dADP + ADP. It carries out the reaction dCMP + ATP = dCDP + ADP. The catalysed reaction is a 2'-deoxyribonucleoside 5'-diphosphate + ATP = a 2'-deoxyribonucleoside 5'-triphosphate + ADP. It catalyses the reaction a ribonucleoside 5'-diphosphate + ATP = a ribonucleoside 5'-triphosphate + ADP. The enzyme catalyses GDP + ATP = GTP + ADP. It carries out the reaction CDP + GTP = CTP + GDP. The catalysed reaction is CDP + ATP = CTP + ADP. It catalyses the reaction UDP + ATP = UTP + ADP. The enzyme catalyses GTP + UDP = UTP + GDP. It carries out the reaction dADP + GTP = dATP + GDP. The catalysed reaction is dCDP + GTP = dCTP + GDP. It catalyses the reaction dCDP + ATP = dCTP + ADP. The enzyme catalyses dGDP + ATP = dGTP + ADP. It carries out the reaction dTDP + GTP = dTTP + GDP. The catalysed reaction is dTDP + ATP = dTTP + ADP. Functionally, broad-specificity mitochondrial nucleoside phosphate kinase involved in cellular nucleotide homeostasis by catalyzing nucleoside-phosphate interconversions. Similar to other adenylate kinases, preferentially catalyzes the phosphorylation of the nucleoside monophosphate AMP with ATP as phosphate donor to produce ADP. Phosphorylates only AMP when using GTP as phosphate donor. In vitro, can also catalyze the phosphorylation of CMP, dAMP and dCMP and use GTP as an alternate phosphate donor. Moreover, exhibits a diphosphate kinase activity, producing ATP, CTP, GTP, UTP, TTP, dATP, dCTP and dGTP from the corresponding diphosphate substrates with either ATP or GTP as phosphate donors. Plays a role in controlling cellular ATP levels by regulating phosphorylation and activation of the energy sensor protein kinase AMPK. Plays a protective role in the cellular response to oxidative stress. This chain is Adenylate kinase 4, mitochondrial, found in Rattus norvegicus (Rat).